The following is a 310-amino-acid chain: Putative methyltransferase mtx subunit H (310 aa).

Belongs to the MtrH family. As to quaternary structure, may be part of a complex composed of 3 subunits; MtxA, MtxH and MtxX.

The polypeptide is Putative methyltransferase mtx subunit H (mtxH) (Methanosarcina barkeri (strain Fusaro / DSM 804)).